The sequence spans 470 residues: Leucine-rich repeat extensin-like protein 6 (470 aa).

A signal peptide spans 1-28 (MREDTFFFQWWFLVSGLSFIFLLPQAFT). Asn-83 carries an N-linked (GlcNAc...) asparagine glycan. 10 LRR repeats span residues 98–122 (VLTV…LGLL), 123–146 (TDLA…LKCL), 147–170 (HLLH…IFSL), 171–194 (PSLK…LFDL), 196–217 (LDAL…IGNS), 219–241 (VSVL…FYKM), 243–265 (KTLH…EIGL), 266–290 (LNQL…IGDM), 291–314 (KSLE…ICRL), and 316–337 (RLEN…CLRL). N-linked (GlcNAc...) asparagine glycosylation occurs at Asn-319. The tract at residues 378-411 (SPPPPPPPPPPPPPPPPPPPPPPPPPPPPPYVYP) is disordered. The contains the Ser-Pro(4) repeats stretch occupies residues 378 to 470 (SPPPPPPPPP…CNDLPTPVHY (93 aa)).

Hydroxylated on proline residues in the S-P-P-P-P repeat. In terms of processing, O-glycosylated on hydroxyprolines. In terms of tissue distribution, expressed in roots.

It localises to the secreted. Its subcellular location is the cell wall. Its function is as follows. Modulates cell morphogenesis by regulating cell wall formation and assembly, and/or growth polarization. The chain is Leucine-rich repeat extensin-like protein 6 (LRX6) from Arabidopsis thaliana (Mouse-ear cress).